A 473-amino-acid chain; its full sequence is GTPase Der (473 aa).

EngA-type G domains lie at 3 to 167 and 203 to 378; these read FTVA…GKDR and LRVA…RVWN. Residues 9 to 16, 56 to 60, 119 to 122, 209 to 216, 256 to 260, and 321 to 324 contribute to the GTP site; these read GRPNVGKS, DTAGL, NKSE, GRPNAGKS, DTAGM, and NKWD. Residues 379–463 form the KH-like domain; that stretch reads KRISTARLNR…PIRIHFRSAE (85 aa).

The protein belongs to the TRAFAC class TrmE-Era-EngA-EngB-Septin-like GTPase superfamily. EngA (Der) GTPase family. As to quaternary structure, associates with the 50S ribosomal subunit.

In terms of biological role, GTPase that plays an essential role in the late steps of ribosome biogenesis. The sequence is that of GTPase Der from Rhizobium etli (strain CIAT 652).